Reading from the N-terminus, the 548-residue chain is Lysine--tRNA ligase (548 aa).

The 'HIGH' region signature appears at 52–60 (PSGLPHIGT). Positions 300–304 (KISKS) match the 'KMSKS' region motif. ATP is bound at residue Lys-303.

This sequence belongs to the class-I aminoacyl-tRNA synthetase family.

The protein localises to the cytoplasm. It carries out the reaction tRNA(Lys) + L-lysine + ATP = L-lysyl-tRNA(Lys) + AMP + diphosphate. The polypeptide is Lysine--tRNA ligase (Mesorhizobium japonicum (strain LMG 29417 / CECT 9101 / MAFF 303099) (Mesorhizobium loti (strain MAFF 303099))).